Consider the following 448-residue polypeptide: Protein TraN (448 aa).

Disordered regions lie at residues 243–273 (NRVGASRTATTARAGQQQSPAVKQSSGNSGE) and 411–448 (EAARRHQALMRKQEQEKKQAQERERGRSQSLGLSNKPS). The segment covering 246 to 261 (GASRTATTARAGQQQS) has biased composition (low complexity). Residues 262 to 271 (PAVKQSSGNS) show a composition bias toward polar residues. Positions 421–437 (RKQEQEKKQAQERERGR) are enriched in basic and acidic residues. The segment covering 438–448 (SQSLGLSNKPS) has biased composition (polar residues).

This sequence to H.influenzae HI_1407.

This chain is Protein TraN (traN), found in Escherichia coli.